Here is a 318-residue protein sequence, read N- to C-terminus: Ankyrin repeat and SOCS box protein 7 (318 aa).

ANK repeat units follow at residues glutamine 13 to glycine 42, asparagine 46 to valine 75, glycine 80 to isoleucine 109, aspartate 116 to proline 145, lysine 149 to isoleucine 178, asparagine 180 to leucine 208, and aspartate 213 to threonine 242. The SOCS box domain occupies leucine 265–isoleucine 318.

Belongs to the ankyrin SOCS box (ASB) family. In terms of assembly, interacts with CUL5. Interacts with RNF7. Interacts with PSRC1.

It participates in protein modification; protein ubiquitination. Its function is as follows. Probable substrate-recognition component of a SCF-like ECS (Elongin-Cullin-SOCS-box protein) E3 ubiquitin-protein ligase complex which mediates the ubiquitination and subsequent proteasomal degradation of target proteins. Plays a role in spindle dynamics and genome integrity by targeting the mitotic progression protein PSRC1 for proteasomal degradation in a cell cycle-dependent manner. Also participates in meiosis by mediating the proper attachment between kinetochores and microtubules. This chain is Ankyrin repeat and SOCS box protein 7 (ASB7), found in Homo sapiens (Human).